We begin with the raw amino-acid sequence, 146 residues long: Hemoglobin subunit delta (146 aa).

In terms of domain architecture, Globin spans 2–146 (HLTGEEKSAV…VATALAHKYH (145 aa)). Serine 50 carries the post-translational modification Phosphoserine. The heme b site is built by histidine 63 and histidine 92.

This sequence belongs to the globin family. Heterotetramer of two delta chains and two alpha chains. As to expression, red blood cells.

In Leontocebus nigricollis (Black-mantled tamarin), this protein is Hemoglobin subunit delta (HBD).